The sequence spans 475 residues: Ankyrin repeat, SAM and basic leucine zipper domain-containing protein 1 (475 aa).

Residues M1–A10 show a composition bias toward low complexity. The tract at residues M1–G24 is disordered. Phosphoserine is present on residues S17, S18, and S20. ANK repeat units lie at residues E45 to S74, Y78 to F107, D110 to V144, R148 to T177, S181 to L210, and D214 to G243. The 63-residue stretch at S272–D334 folds into the SAM domain.

Interacts with DDX4, PIWIL1, RANBP9 and TDRD1.

It is found in the cytoplasm. Its function is as follows. Plays a central role during spermatogenesis by repressing transposable elements and preventing their mobilization, which is essential for the germline integrity. Acts via the piRNA metabolic process, which mediates the repression of transposable elements during meiosis by forming complexes composed of piRNAs and Piwi proteins and governs the methylation and subsequent repression of transposons. Its association with pi-bodies suggests a participation in the primary piRNAs metabolic process. Required prior to the pachytene stage to facilitate the production of multiple types of piRNAs, including those associated with repeats involved in the regulation of retrotransposons. May act by mediating protein-protein interactions during germ cell maturation. The polypeptide is Ankyrin repeat, SAM and basic leucine zipper domain-containing protein 1 (ASZ1) (Carollia perspicillata (Seba's short-tailed bat)).